The chain runs to 170 residues: Zinc finger matrin-type protein 5 (170 aa).

A C3H1-type zinc finger spans residues 51-79 (EQNKRPCRKFLLTGQCDFGSNCRFSHMSE). Residues 150–170 (PPSLRAPPPGGWPLQPSVQWG) form a disordered region.

As to quaternary structure, component of the U11/U12 snRNPs that are part of the U12-type spliceosome.

The protein resides in the nucleus. The polypeptide is Zinc finger matrin-type protein 5 (ZMAT5) (Bos taurus (Bovine)).